Reading from the N-terminus, the 556-residue chain is Glutamine--tRNA ligase (556 aa).

The 'HIGH' region signature appears at Pro-34–His-44. ATP-binding positions include Glu-35–Asn-37 and His-41–Ser-47. Asp-67 and Tyr-212 together coordinate L-glutamine. ATP-binding positions include Thr-231, Arg-261 to Leu-262, and Met-269 to Lys-271. A 'KMSKS' region motif is present at residues Val-268–Arg-272.

Belongs to the class-I aminoacyl-tRNA synthetase family. In terms of assembly, monomer.

Its subcellular location is the cytoplasm. It catalyses the reaction tRNA(Gln) + L-glutamine + ATP = L-glutaminyl-tRNA(Gln) + AMP + diphosphate. The protein is Glutamine--tRNA ligase of Vibrio cholerae serotype O1 (strain ATCC 39315 / El Tor Inaba N16961).